The sequence spans 197 residues: Guanylate kinase (197 aa).

The region spanning G7–V185 is the Guanylate kinase-like domain. Residue S14 to S21 participates in ATP binding.

It belongs to the guanylate kinase family.

It localises to the cytoplasm. The enzyme catalyses GMP + ATP = GDP + ADP. Essential for recycling GMP and indirectly, cGMP. The chain is Guanylate kinase from Rickettsia typhi (strain ATCC VR-144 / Wilmington).